Consider the following 404-residue polypeptide: Arginine biosynthesis bifunctional protein ArgJ (404 aa).

T156, K182, T193, E277, N399, and S404 together coordinate substrate. T193 acts as the Nucleophile in catalysis.

The protein belongs to the ArgJ family. Heterotetramer of two alpha and two beta chains.

Its subcellular location is the cytoplasm. It carries out the reaction N(2)-acetyl-L-ornithine + L-glutamate = N-acetyl-L-glutamate + L-ornithine. It catalyses the reaction L-glutamate + acetyl-CoA = N-acetyl-L-glutamate + CoA + H(+). The protein operates within amino-acid biosynthesis; L-arginine biosynthesis; L-ornithine and N-acetyl-L-glutamate from L-glutamate and N(2)-acetyl-L-ornithine (cyclic): step 1/1. Its pathway is amino-acid biosynthesis; L-arginine biosynthesis; N(2)-acetyl-L-ornithine from L-glutamate: step 1/4. Its function is as follows. Catalyzes two activities which are involved in the cyclic version of arginine biosynthesis: the synthesis of N-acetylglutamate from glutamate and acetyl-CoA as the acetyl donor, and of ornithine by transacetylation between N(2)-acetylornithine and glutamate. The protein is Arginine biosynthesis bifunctional protein ArgJ of Chlorobaculum tepidum (strain ATCC 49652 / DSM 12025 / NBRC 103806 / TLS) (Chlorobium tepidum).